A 489-amino-acid chain; its full sequence is Nuclear distribution protein PAC1 (489 aa).

Residues 66–98 (STVLRLQKKIIDLENEISNLNNIINSSNSDNNG) are a coiled coil. 7 WD repeats span residues 119–158 (QCEN…NTIP), 164–205 (AHTR…RTLN), 206–246 (GHEH…SLKS), 249–291 (GHSE…GLAM), 328–368 (IPLE…IAPH), 389–428 (GHSS…ETGS), and 437–486 (GHDG…NSIK).

Belongs to the WD repeat LIS1/nudF family. In terms of assembly, self-associates. Interacts with NDL1 and dynein.

The protein resides in the cytoplasm. The protein localises to the cytoskeleton. It localises to the spindle pole. Functionally, positively regulates the activity of the minus-end directed microtubule motor protein dynein. Plays a central role in positioning the mitotic spindle at the bud neck during cell division. Targets cytoplasmic dynein to microtubule plus ends, thereby promoting dynein-mediated microtubule sliding along the bud cortex and consequently the movement of the mitotic spindle to the bud neck. The polypeptide is Nuclear distribution protein PAC1 (Candida dubliniensis (strain CD36 / ATCC MYA-646 / CBS 7987 / NCPF 3949 / NRRL Y-17841) (Yeast)).